The following is a 142-amino-acid chain: MKTQSAKPAEVTHDWYIVDAEGKTLGRLATQIAARLRGKHKPSFTPHVDTGDYIVVINADKIAVTGKKAQDKKYYRHSGYPGGIKETNFTKLIAHKPEEVLLKAVKGMLPKGPLGYATIKKLKLYAGTEHPHAAQQPKELDI.

The protein belongs to the universal ribosomal protein uL13 family. In terms of assembly, part of the 50S ribosomal subunit.

Functionally, this protein is one of the early assembly proteins of the 50S ribosomal subunit, although it is not seen to bind rRNA by itself. It is important during the early stages of 50S assembly. This is Large ribosomal subunit protein uL13 from Psychrobacter sp. (strain PRwf-1).